We begin with the raw amino-acid sequence, 386 residues long: All-trans-retinol dehydrogenase [NAD(+)] ADH7 (386 aa).

C59 is a Zn(2+) binding site. 60–64 (RTDDH) is an NAD(+) binding site. Zn(2+)-binding residues include H80, C110, C113, C116, C124, and C186. Residues 211-216 (GLGGVG), D235, K240, 281-283 (IGH), 304-306 (VGV), 329-331 (CVF), and R381 each bind NAD(+).

The protein belongs to the zinc-containing alcohol dehydrogenase family. Class-IV subfamily. Homodimer. Zn(2+) is required as a cofactor. As to expression, preferentially expressed in stomach.

It is found in the cytoplasm. It carries out the reaction a primary alcohol + NAD(+) = an aldehyde + NADH + H(+). The enzyme catalyses 10-hydroxydecanoate + NAD(+) = 10-oxodecanoate + NADH + H(+). It catalyses the reaction all-trans-retinol + NAD(+) = all-trans-retinal + NADH + H(+). The catalysed reaction is 9-cis-retinol + NAD(+) = 9-cis-retinal + NADH + H(+). It carries out the reaction all-trans-3,4-didehydroretinol + NAD(+) = all-trans-3,4-didehydroretinal + NADH + H(+). The enzyme catalyses all-trans-4-hydroxyretinol + NAD(+) = all-trans-4-hydroxyretinal + NADH + H(+). It catalyses the reaction all-trans-4-oxoretinol + NAD(+) = all-trans-4-oxoretinal + NADH + H(+). The catalysed reaction is 12-hydroxydodecanoate + NAD(+) = 12-oxododecanoate + NADH + H(+). It carries out the reaction 16-hydroxyhexadecanoate + NAD(+) = 16-oxohexadecanoate + NADH + H(+). The enzyme catalyses hexan-1-ol + NAD(+) = hexanal + NADH + H(+). It catalyses the reaction (E)-hex-2-en-1-ol + NAD(+) = (E)-hex-2-enal + NADH + H(+). The catalysed reaction is (E)-4-hydroxynon-2-en-1-ol + NAD(+) = (E)-4-hydroxynon-2-enal + NADH + H(+). Retinol oxidation is inhibited by the detergent Tween 80. Ethanol inhibits both all-trans-retinol and 9-cis-retinol oxidation. 13-cis-retinol is an effective competitive inhibitor of the 9-cis-retinol oxidation. All-trans-retinoic acid is a powerful inhibitor of all-trans-retinol oxidation. 13-cis-retinoic acid is a powerful inhibitor of all-trans-retinol oxidation. Cimetidine competitively inhibited ethanol oxidation. Its function is as follows. Catalyzes the NAD-dependent oxidation of all-trans-retinol, alcohol, and omega-hydroxy fatty acids and their derivatives. Oxidizes preferentially all trans-retinol, all-trans-4-hydroxyretinol, 9-cis-retinol, 2-hexenol, and long chain omega-hydroxy fatty acids such as juniperic acid. In vitro can also catalyze the NADH-dependent reduction of all-trans-retinal and aldehydes and their derivatives. Reduces preferentially all trans-retinal, all-trans-4-oxoretinal and hexanal. Catalyzes in the oxidative direction with higher efficiency. Therefore may participate in retinoid metabolism, fatty acid omega-oxidation, and elimination of cytotoxic aldehydes produced by lipid peroxidation. In Homo sapiens (Human), this protein is All-trans-retinol dehydrogenase [NAD(+)] ADH7.